Here is a 113-residue protein sequence, read N- to C-terminus: Iron-sulfur cluster assembly protein CyaY (113 aa).

Belongs to the frataxin family.

In terms of biological role, involved in iron-sulfur (Fe-S) cluster assembly. May act as a regulator of Fe-S biogenesis. In Ralstonia nicotianae (strain ATCC BAA-1114 / GMI1000) (Ralstonia solanacearum), this protein is Iron-sulfur cluster assembly protein CyaY.